The following is a 600-amino-acid chain: Albumin (600 aa).

Residues 1–10 form the signal peptide; that stretch reads LLFLFSSAYS. A propeptide spanning residues 11 to 16 is cleaved from the precursor; it reads RGVFRR. 3 Albumin domains span residues 11-202, 203-395, and 396-593; these read RGVF…DELR, DEGK…EFQP, and LVEE…KFVA. Histidine 19 provides a ligand contact to Cu cation. A Phosphoserine modification is found at serine 21. Ca(2+)-binding residues include glutamate 22 and aspartate 29. The cysteines at positions 69 and 78 are disulfide-linked. A phosphoserine mark is found at serine 74 and serine 81. A Zn(2+)-binding site is contributed by histidine 83. 6 disulfide bridges follow: cysteine 91–cysteine 107, cysteine 106–cysteine 117, cysteine 140–cysteine 185, cysteine 184–cysteine 193, cysteine 216–cysteine 262, and cysteine 261–cysteine 269. A Phosphothreonine modification is found at threonine 99. Lysine 221 is modified (N6-succinyllysine). Lysine 256 serves as a coordination point for (4Z,15Z)-bilirubin IXalpha. Residue glutamate 260 participates in Ca(2+) binding. Zn(2+) contacts are provided by histidine 263 and aspartate 265. Residues aspartate 265, glutamate 268, aspartate 271, and aspartate 275 each coordinate Ca(2+). 8 disulfides stabilise this stretch: cysteine 281–cysteine 295, cysteine 294–cysteine 305, cysteine 332–cysteine 377, cysteine 376–cysteine 385, cysteine 408–cysteine 454, cysteine 453–cysteine 464, cysteine 477–cysteine 493, and cysteine 492–cysteine 503. Residue serine 289 is modified to Phosphoserine. Position 435 is a phosphoserine (serine 435). Phosphothreonine occurs at positions 436 and 438. At lysine 452 the chain carries N6-succinyllysine. Serine 505 bears the Phosphoserine mark. Cystine bridges form between cysteine 530-cysteine 575 and cysteine 574-cysteine 583. N6-succinyllysine is present on lysine 535. Lysine 550 is modified (N6-methyllysine). An N6-succinyllysine modification is found at lysine 580.

It belongs to the ALB/AFP/VDB family. In terms of assembly, interacts with FCGRT; this interaction regulates ALB homeostasis. Interacts with TASOR. In plasma, occurs in a covalently-linked complex with chromophore-bound alpha-1-microglobulin; this interaction does not prevent fatty acid binding to ALB. Post-translationally, phosphorylated by FAM20C in the extracellular medium. Plasma.

Its subcellular location is the secreted. In terms of biological role, binds water, Ca(2+), Na(+), K(+), fatty acids, hormones, bilirubin and drugs. Its main function is the regulation of the colloidal osmotic pressure of blood. Major zinc transporter in plasma, typically binds about 80% of all plasma zinc. Major calcium and magnesium transporter in plasma, binds approximately 45% of circulating calcium and magnesium in plasma. Potentially has more than two calcium-binding sites and might additionally bind calcium in a non-specific manner. The shared binding site between zinc and calcium at residue Asp-265 suggests a crosstalk between zinc and calcium transport in the blood. The rank order of affinity is zinc &gt; calcium &gt; magnesium. Binds to the bacterial siderophore enterobactin and inhibits enterobactin-mediated iron uptake of E.coli from ferric transferrin, and may thereby limit the utilization of iron and growth of enteric bacteria such as E.coli. Does not prevent iron uptake by the bacterial siderophore aerobactin. This chain is Albumin (ALB), found in Macaca mulatta (Rhesus macaque).